Here is a 334-residue protein sequence, read N- to C-terminus: Dipeptide transport ATP-binding protein DppF (334 aa).

The 250-residue stretch at 13 to 262 (LQAIDLKKHY…PRHPYTQALL (250 aa)) folds into the ABC transporter domain. 55–62 (GESGCGKS) provides a ligand contact to ATP.

Belongs to the ABC transporter superfamily. The complex is composed of two ATP-binding proteins (DppD and DppF), two transmembrane proteins (DppB and DppC) and a solute-binding protein (DppA). MppA can replace DppA as binding protein for heme and ALA transport.

The protein resides in the cell inner membrane. The catalysed reaction is a dipeptide(out) + ATP + H2O = a dipeptide(in) + ADP + phosphate + H(+). In terms of biological role, part of the ABC transporter DppABCDF involved in dipeptide transport. Responsible for energy coupling to the transport system. When a foreign outer membrane heme receptor is expressed in E.coli, DppABCDF can also transport heme and its precursor, 5-aminolevulinic acid (ALA), from the periplasm into the cytoplasm. The sequence is that of Dipeptide transport ATP-binding protein DppF (dppF) from Escherichia coli (strain K12).